The primary structure comprises 433 residues: MESLNALIQGLGLMHLGAGQAIMLLVSLLLLWLAIAKKFEPLLLLPIGFGGLLSNIPEAGLALTALESLLAHRDPAQLAVIAAKLHCAPDVHAIKAALALALPSVQGQMESLAVDMGYSAGVLAIFYKVAIGSGIAPLVIFMGVGAMTDFGPLLANPRTLLLGAAAQFGIFATVLGALTLNYFGIISFTLPQAAAIGIIGGADGPTAIYLSGKLAPELLGAIAVAAYSYMALVPLIQPPIMKALTTDKERKIRMVQLRTVSKREKILFPAVLLLLVALLLPDAAPLLGMFCFGNLMRESGVVERLSDTVQNALINIVTIFLGLSVGAKLVADKFLQPQTLGILVLGVIAFCVGTAAGVLMAKLMNVFSRHKINPLIGSAGVSAVPMAARVSNKVGLEADGQNFLLMHAMGPNVAGVIGSAIAAGVMLKYVLAM.

9 helical membrane-spanning segments follow: residues 16–36, 122–142, 159–178, 180–202, 222–244, 266–286, 308–327, 339–361, and 409–431; these read LGAG…LAIA, VLAI…VIFM, TLLL…LGAL, LNYF…IGGA, IAVA…MKAL, ILFP…AAPL, TVQN…SVGA, TLGI…VLMA, and MGPN…KYVL.

The protein belongs to the GcdB/MmdB/OadB family. In terms of assembly, heterotrimer of an alpha, a beta and a gamma subunit. The cofactor is Na(+). In terms of processing, the N-terminus is blocked.

The protein localises to the cell membrane. The enzyme catalyses oxaloacetate + 2 Na(+)(in) + H(+) = pyruvate + 2 Na(+)(out) + CO2. Catalyzes the decarboxylation of oxaloacetate coupled to Na(+) translocation. This is Oxaloacetate decarboxylase beta chain (oadB) from Klebsiella pneumoniae.